The following is a 180-amino-acid chain: Large ribosomal subunit protein uL5 (180 aa).

This sequence belongs to the universal ribosomal protein uL5 family. Part of the 50S ribosomal subunit; part of the 5S rRNA/L5/L18/L25 subcomplex. Contacts the 5S rRNA and the P site tRNA. Forms a bridge to the 30S subunit in the 70S ribosome.

Functionally, this is one of the proteins that bind and probably mediate the attachment of the 5S RNA into the large ribosomal subunit, where it forms part of the central protuberance. In the 70S ribosome it contacts protein S13 of the 30S subunit (bridge B1b), connecting the 2 subunits; this bridge is implicated in subunit movement. Contacts the P site tRNA; the 5S rRNA and some of its associated proteins might help stabilize positioning of ribosome-bound tRNAs. This is Large ribosomal subunit protein uL5 from Streptococcus equi subsp. equi (strain 4047).